A 316-amino-acid polypeptide reads, in one-letter code: Secondary metabolism regulator laeA (316 aa).

This sequence belongs to the methyltransferase superfamily. LaeA methyltransferase family. As to quaternary structure, component of the heterotrimeric velvet complex composed of laeA, ve1 and velB; Ve1 acting as a bridging protein between laeA and velB. Interacts directly with veA.

The protein localises to the nucleus. It localises to the cytoplasm. It catalyses the reaction L-methionyl-[protein] + S-adenosyl-L-methionine = S-methyl-L-methionyl-[protein] + S-adenosyl-L-homocysteine. Functionally, methyltransferase that performs automethylation. No other methyl-accepting substrate has been identified yet. Component of the velvet transcription factor complex that acts as a global regulator for secondary metabolite gene expression. Controls the expression of the mycotoxins trichothecenes and zearalenon gene clusters. Negatively controls perithecial induction, but positively controls virulence toward the host plant. This chain is Secondary metabolism regulator laeA, found in Gibberella zeae (strain ATCC MYA-4620 / CBS 123657 / FGSC 9075 / NRRL 31084 / PH-1) (Wheat head blight fungus).